Here is a 311-residue protein sequence, read N- to C-terminus: Protein translocase subunit SecF (311 aa).

Helical transmembrane passes span alanine 19–leucine 39, methionine 142–leucine 162, leucine 166–leucine 186, leucine 192–valine 212, isoleucine 245–isoleucine 265, and leucine 272–leucine 292.

The protein belongs to the SecD/SecF family. SecF subfamily. As to quaternary structure, forms a complex with SecD. Part of the essential Sec protein translocation apparatus which comprises SecA, SecYEG and auxiliary proteins SecDF-YajC and YidC.

The protein localises to the cell inner membrane. Its function is as follows. Part of the Sec protein translocase complex. Interacts with the SecYEG preprotein conducting channel. SecDF uses the proton motive force (PMF) to complete protein translocation after the ATP-dependent function of SecA. The chain is Protein translocase subunit SecF from Magnetococcus marinus (strain ATCC BAA-1437 / JCM 17883 / MC-1).